The chain runs to 278 residues: S-formylglutathione hydrolase YeiG (278 aa).

Residues S145, D223, and H256 each act as charge relay system in the active site.

It belongs to the esterase D family.

It carries out the reaction S-formylglutathione + H2O = formate + glutathione + H(+). Functionally, serine hydrolase involved in the detoxification of formaldehyde. Hydrolyzes S-formylglutathione to glutathione and formate. In Escherichia coli O139:H28 (strain E24377A / ETEC), this protein is S-formylglutathione hydrolase YeiG (yeiG).